Here is a 527-residue protein sequence, read N- to C-terminus: Nucleobase-ascorbate transporter LPE1 (527 aa).

Transmembrane regions (helical) follow at residues 43-63, 68-88, 92-112, 132-152, 163-183, 189-209, 219-239, 284-304, 361-383, 387-409, 427-447, and 458-478; these read LVML…MGGG, AIVI…QVHF, LPAV…IILS, LQGA…FGIW, AAVP…FPGV, VGLP…HLFA, AVLV…AAGA, FAML…LIAV, VIKI…AVLA, LPIF…FSLL, LFLG…FGFG, and VMVN…AYLL.

It belongs to the nucleobase:cation symporter-2 (NCS2) (TC 2.A.40) family. Highly expressed in roots.

It localises to the membrane. Inhibited by excess of xanthin, uric acid and ascorbic acid, and by 100 um N,N-dicyclohexylcarbodiimide and 30 um carbonyl cyanide m-chlorophenyl-hydrazone. In terms of biological role, high affinity uric acid-xanthine transporter in A.nidulans. Binds, but cannot transport ascorbic acid. This Zea mays (Maize) protein is Nucleobase-ascorbate transporter LPE1 (LPE1).